A 771-amino-acid polypeptide reads, in one-letter code: Assimilatory nitrate reductase electron transfer subunit (771 aa).

43–79 (YNRILLSSVLQGEASLDDITLNSKDWYDKHGITLYTG) serves as a coordination point for FAD. Positions 414, 416, 449, and 452 each coordinate [2Fe-2S] cluster.

The cofactor is FAD. It depends on [2Fe-2S] cluster as a cofactor.

Required for nitrate assimilation. The protein is Assimilatory nitrate reductase electron transfer subunit (nasB) of Bacillus subtilis (strain 168).